We begin with the raw amino-acid sequence, 291 residues long: 4-hydroxy-tetrahydrodipicolinate synthase (291 aa).

T45 lines the pyruvate pocket. Y133 acts as the Proton donor/acceptor in catalysis. K161 serves as the catalytic Schiff-base intermediate with substrate. Residue I203 participates in pyruvate binding.

It belongs to the DapA family. In terms of assembly, homotetramer.

It is found in the cytoplasm. The catalysed reaction is L-aspartate 4-semialdehyde + pyruvate = (2S,4S)-4-hydroxy-2,3,4,5-tetrahydrodipicolinate + H2O + H(+). It participates in amino-acid biosynthesis; L-lysine biosynthesis via DAP pathway; (S)-tetrahydrodipicolinate from L-aspartate: step 3/4. Is allosterically feedback inhibited by lysine; the N.meningitidis enzyme is significantly more sensitive to lysine than the E.coli enzyme. Shows substrate inhibition by (S)-ASA, with a Ki of 1.7 mM. Its function is as follows. Catalyzes the condensation of (S)-aspartate-beta-semialdehyde [(S)-ASA] and pyruvate to 4-hydroxy-tetrahydrodipicolinate (HTPA). This Neisseria meningitidis serogroup B (strain ATCC BAA-335 / MC58) protein is 4-hydroxy-tetrahydrodipicolinate synthase.